A 181-amino-acid polypeptide reads, in one-letter code: Ribonuclease HII (181 aa).

Residues Met1–Ile181 form the RNase H type-2 domain. A divalent metal cation contacts are provided by Asp6, Glu7, and Asp98.

The protein belongs to the RNase HII family. The cofactor is Mn(2+). Requires Mg(2+) as cofactor.

Its subcellular location is the cytoplasm. The catalysed reaction is Endonucleolytic cleavage to 5'-phosphomonoester.. Functionally, endonuclease that specifically degrades the RNA of RNA-DNA hybrids. In Borrelia recurrentis (strain A1), this protein is Ribonuclease HII.